The chain runs to 176 residues: Replication restart protein PriC (176 aa).

This sequence belongs to the PriC family. As to quaternary structure, component of the replication restart primosome, which is composed of PriA, PriB, PriC, DnaB and DnaT; DnaG primase associates transiently with this complex. Interacts with the C-terminus of SSB; this interaction is required to load the main replicative helicase onto substrate replication forks. Interacts with helicase DnaB alone and in the DnaB-DnaC complex, probably 1:1 binding with DnaB. Interacts with DnaT.

In terms of biological role, involved in the restart of stalled replication forks, which reloads the DnaB replicative helicase on sites other than the origin of replication. Recognizes abandoned replication forks and remodels DNA single-stranded binding protein (SSB) on ssDNA to uncover a loading site for DnaB. There are several restart pathways, the PriA-PriC pathway is a minor restart pathway. Part of the minor PriC-Rep pathway for restart of stalled replication forks, which has a different substrate specificity than PriA. Part of the major restart pathway with PriA, PriB, DnaB, DnaT and DnaG primase. priB and priC have redundant roles in the cell. Binds 7-9 nucleotides of single-stranded (ss)DNA. The sequence is that of Replication restart protein PriC from Klebsiella pneumoniae subsp. pneumoniae (strain ATCC 700721 / MGH 78578).